The chain runs to 649 residues: MDVKTYPVLEAAKNRTLLDNATYLEWYRESVADPEKFWGEHGKRIEWFEPYTKVKNTSFEGDVSIKWFEDGLTNVSYNCIDRHLKTHGEKTAIIWEGDNPYLDKKITYNELYDKVCRLANVLKEQGVKKGDRVTIYMPMIPEAAYAMLACARIGAIHSVVFGGFSPEALAGRIVDCESTFVITCDEGVRGGKPVALKENTDTAIDIAARQHVTVSKVLVVRRTGGKVGWAPGRDLWYHQETAAAEPHCPPEKMNAEDPLFILYTSGSTGKPKGVLHTTGGYLVYASMTHQYVFDYQDGDIYWCTADVGWVTGHSYIVYGPLANAATTLMFEGVPNFPDAGRFWEVVDKHKVNIFYTAPTAIRSLMGAGDDFVKRSSRSSLRLLGTVGEPINPEAWEWYYHVVGDERCPVVDTWWQTETGGILITPLPGATDLKPGSATRPFFGVQPQIVDSDGKVVDGAADGNLCITDSWPGQMRTVYGDHERFIQTYFSTYKGKYFTGDGCRRDEDGYYWITGRVDDVLNVSGHRLGTAEVESALVSHNLVSEAAVVGYPHPIKGQGIYCYVSLMAGEVGDDELRQALVKHVRSEIGPIATPDKIQFAPGLPKTRSGKIMRRILRKIAEDDFGSLGDTSTLADPGVVDDLIANRQNRA.

Residues Arg189–Lys192, Thr311, and Asn335 contribute to the CoA site. ATP-binding positions include Gly387–Pro389, Asp411–Thr416, Asp500, and Arg515. Ser523 is a CoA binding site. Residue Arg526 participates in ATP binding. Mg(2+) is bound by residues Val537, His539, and Val542. Residue Arg584 coordinates CoA. At Lys609 the chain carries N6-acetyllysine.

This sequence belongs to the ATP-dependent AMP-binding enzyme family. Mg(2+) is required as a cofactor. Post-translationally, acetylated. Deacetylation by the SIR2-homolog deacetylase activates the enzyme.

It carries out the reaction acetate + ATP + CoA = acetyl-CoA + AMP + diphosphate. Catalyzes the conversion of acetate into acetyl-CoA (AcCoA), an essential intermediate at the junction of anabolic and catabolic pathways. AcsA undergoes a two-step reaction. In the first half reaction, AcsA combines acetate with ATP to form acetyl-adenylate (AcAMP) intermediate. In the second half reaction, it can then transfer the acetyl group from AcAMP to the sulfhydryl group of CoA, forming the product AcCoA. The polypeptide is Acetyl-coenzyme A synthetase (Rhizobium meliloti (strain 1021) (Ensifer meliloti)).